Here is a 180-residue protein sequence, read N- to C-terminus: Tubulin polymerization-promoting protein homolog (180 aa).

Composition is skewed to basic and acidic residues over residues 136 to 158 and 169 to 180; these read TGAH…RADT and KNKDSYDKTHGK. The segment at 136-180 is disordered; the sequence is TGAHKERFDAEGKGKGKSGRADTTENTGYVGAYKNKDSYDKTHGK.

This sequence belongs to the TPPP family.

In terms of biological role, regulator of microtubule dynamics. The chain is Tubulin polymerization-promoting protein homolog from Caenorhabditis elegans.